The chain runs to 189 residues: 3-hydroxyanthranilate 3,4-dioxygenase (189 aa).

Arg-46 is a binding site for O2. Fe cation-binding residues include His-50, Glu-56, and His-94. Glu-56 contacts substrate. Substrate is bound by residues Arg-98 and Glu-109. 4 residues coordinate Fe cation: Cys-124, Cys-127, Cys-161, and Cys-164.

This sequence belongs to the 3-HAO family. Homodimer. Requires Fe(2+) as cofactor.

The catalysed reaction is 3-hydroxyanthranilate + O2 = (2Z,4Z)-2-amino-3-carboxymuconate 6-semialdehyde. The protein operates within cofactor biosynthesis; NAD(+) biosynthesis; quinolinate from L-kynurenine: step 3/3. In terms of biological role, catalyzes the oxidative ring opening of 3-hydroxyanthranilate to 2-amino-3-carboxymuconate semialdehyde, which spontaneously cyclizes to quinolinate. The chain is 3-hydroxyanthranilate 3,4-dioxygenase from Shewanella woodyi (strain ATCC 51908 / MS32).